The chain runs to 1466 residues: ABC transporter C family member 6 (1466 aa).

10 consecutive transmembrane segments (helical) span residues 16 to 36 (SVLS…SWLF), 63 to 83 (LVLI…LLSC), 91 to 111 (WPFL…VYLF), 128 to 148 (VWWV…FVLY), 158 to 178 (FVIS…SCLW), 286 to 306 (IVLS…APYL), 322 to 339 (NQGY…LVEC), 400 to 420 (WFMH…WILY), 425 to 445 (LGSI…YPFA), and 512 to 532 (SVLW…CLLL). The 282-residue stretch at 286–567 (IVLSALLAFV…LPETISMIVQ (282 aa)) folds into the ABC transmembrane type-1 1 domain. Residues 601–824 (VEISNGTFSW…GTDFMELVGA (224 aa)) enclose the ABC transporter 1 domain. 636-643 (GTVGSGKS) contacts ATP. Residues 840–876 (ASEKSTTDKENEVLHHKEKQENGSDNKPSGQLVQEEE) are disordered. A compositionally biased stretch (basic and acidic residues) spans 844-863 (STTDKENEVLHHKEKQENGS). 3 consecutive transmembrane segments (helical) span residues 890–910 (YMAL…QVLF), 937–957 (GFTL…CILI), and 1026–1046 (ILGI…VFIP). One can recognise an ABC transmembrane type-1 2 domain in the interval 900–1182 (IPLILVVQVL…LIWTLCDLEN (283 aa)). The region spanning 1219–1453 (ITICNLQVRY…RSSLFSKLVA (235 aa)) is the ABC transporter 2 domain. Residue 1253–1260 (GRTGCGKS) coordinates ATP.

The protein belongs to the ABC transporter superfamily. ABCC family. Conjugate transporter (TC 3.A.1.208) subfamily. As to expression, ubiquitous.

It localises to the membrane. It carries out the reaction ATP + H2O + xenobioticSide 1 = ADP + phosphate + xenobioticSide 2.. In terms of biological role, pump for glutathione S-conjugates. This Arabidopsis thaliana (Mouse-ear cress) protein is ABC transporter C family member 6 (ABCC6).